The following is a 526-amino-acid chain: Lysine--tRNA ligase (526 aa).

A 'HIGH' region motif is present at residues 44–52 (PSGLPHIGT). The 'KMSKS' region signature appears at 290–294 (KISKS). Residue Lys293 participates in ATP binding.

Belongs to the class-I aminoacyl-tRNA synthetase family.

The protein resides in the cytoplasm. The catalysed reaction is tRNA(Lys) + L-lysine + ATP = L-lysyl-tRNA(Lys) + AMP + diphosphate. In Rickettsia typhi (strain ATCC VR-144 / Wilmington), this protein is Lysine--tRNA ligase.